Reading from the N-terminus, the 683-residue chain is U4/U6 small nuclear ribonucleoprotein Prp3 (683 aa).

The 87-residue stretch at 1–87 folds into the PWI domain; it reads MALSKRELDE…HSKSSSDRSR (87 aa). Residues 73–107 show a composition bias toward basic and acidic residues; that stretch reads GRSSRHSKSSSDRSRKRELKEVFGDDSEISKESSG. The disordered stretch occupies residues 73-135; that stretch reads GRSSRHSKSS…IPGPPSESPG (63 aa). A Glycyl lysine isopeptide (Lys-Gly) (interchain with G-Cter in SUMO2) cross-link involves residue K139. The interval 153-183 is disordered; sequence IEERKKQLSFISPPTPQPKTPSSSQPERLPI. The residue at position 164 (S164) is a Phosphoserine. Residue T167 is modified to Phosphothreonine. Glycyl lysine isopeptide (Lys-Gly) (interchain with G-Cter in SUMO2) cross-links involve residues K244 and K252. Positions 416–550 are mediates interaction with SART3; the sequence is NLVEHPAQLN…VHISVYRVRN (135 aa). At S619 the chain carries Phosphoserine.

Component of the precatalytic spliceosome (spliceosome B complex). Component of the U4/U6-U5 tri-snRNP complex, a building block of the precatalytic spliceosome (spliceosome B complex). The U4/U6-U5 tri-snRNP complex is composed of the U4, U6 and U5 snRNAs and at least PRPF3, PRPF4, PRPF6, PRPF8, PRPF31, SNRNP200, TXNL4A, SNRNP40, SNRPB, SNRPD1, SNRPD2, SNRPD3, SNRPE, SNRPF, SNRPG, DDX23, CD2BP2, PPIH, SNU13, EFTUD2, SART1 and USP39, plus LSM2, LSM3, LSM4, LSM5, LSM6, LSM7 and LSM8. Interacts directly with PRPF4. Part of a heteromeric complex containing PPIH, PRPF3 and PRPF4 that is stable in the absence of RNA. Interacts with SART3; the interaction is direct and recruits the deubiquitinase USP4 to PRPF3. Interacts with PRPF19. Interacts ('Lys-63'-linked polyubiquitinated) with PRPF8 (via the MPN (JAB/Mov34) domain); may stabilize the U4/U6-U5 tri-snRNP complex. Interacts with ERCC6. In terms of processing, ubiquitinated. Undergoes 'Lys-63'-linked polyubiquitination by PRPF19 and deubiquitination by USP4. 'Lys-63'-linked ubiquitination increases the affinity for PRPF8 and may regulate the assembly of the U4/U6-U5 tri-snRNP complex. As to expression, highly expressed in retina, liver, kidney and blood. Detected at lower levels in heart and brain.

The protein resides in the nucleus. The protein localises to the nucleus speckle. In terms of biological role, plays a role in pre-mRNA splicing as component of the U4/U6-U5 tri-snRNP complex that is involved in spliceosome assembly, and as component of the precatalytic spliceosome (spliceosome B complex). In Homo sapiens (Human), this protein is U4/U6 small nuclear ribonucleoprotein Prp3 (PRPF3).